The sequence spans 151 residues: F-box protein GID2 (151 aa).

The segment covering 1–25 (MKRSTTDSDLAGDAHNETNKKMKST) has biased composition (basic and acidic residues). Residues 1-27 (MKRSTTDSDLAGDAHNETNKKMKSTEE) are disordered. In terms of domain architecture, F-box spans 29 to 75 (EIGFSNLDENLVYEVLKHVDAKTLAMSSCVSKIWHKTAQDERLWELI).

Part of some SCF(GID2) complex, which consist of SKP1B, CUL1 cullin, GID2/SLY1 and some RING box protein. Interacts directly with SKP1A and SKP1B. Interacts directly with DELLA proteins GAI, RGA, RGL1, RGL3 and probably RGL2. May have a higher affinity for phosphorylated DELLA proteins. In terms of tissue distribution, expressed in all tissues tested, including rosette leaves, green siliques, flowers, stems, cauline leaves and seedlings.

Its subcellular location is the nucleus. The protein operates within protein modification; protein ubiquitination. Its function is as follows. Essential component of the SCF-type E3 ligase complex, SCF(GID2), a complex that positively regulates the gibberellin signaling pathway. Upon gibberellin treatment, the SCF(GID2) complex mediates the ubiquitination and subsequent degradation of DELLA proteins (GAI, RGA and RGL2), some repressors of the gibberellin pathway, leading to activate the pathway. This chain is F-box protein GID2 (GID2), found in Arabidopsis thaliana (Mouse-ear cress).